The chain runs to 107 residues: Flagellar hook-basal body complex protein FliE (107 aa).

The protein belongs to the FliE family.

Its subcellular location is the bacterial flagellum basal body. This is Flagellar hook-basal body complex protein FliE from Mesorhizobium japonicum (strain LMG 29417 / CECT 9101 / MAFF 303099) (Mesorhizobium loti (strain MAFF 303099)).